A 389-amino-acid polypeptide reads, in one-letter code: Chalcone synthase 6 (389 aa).

The active site involves Cys164.

The protein belongs to the thiolase-like superfamily. Chalcone/stilbene synthases family.

It catalyses the reaction (E)-4-coumaroyl-CoA + 3 malonyl-CoA + 3 H(+) = 2',4,4',6'-tetrahydroxychalcone + 3 CO2 + 4 CoA. It functions in the pathway secondary metabolite biosynthesis; flavonoid biosynthesis. Its function is as follows. The primary product of this enzyme is 4,2',4',6'-tetrahydroxychalcone (also termed naringenin-chalcone or chalcone) which can under specific conditions spontaneously isomerize into naringenin. In Trifolium subterraneum (Subterranean clover), this protein is Chalcone synthase 6 (CHS6).